A 388-amino-acid polypeptide reads, in one-letter code: Formate-dependent phosphoribosylglycinamide formyltransferase (388 aa).

N(1)-(5-phospho-beta-D-ribosyl)glycinamide-binding positions include Glu15–Leu16 and Glu75. ATP contacts are provided by residues Arg107, Lys148, Ser153–Gln158, Glu188–Leu191, and Glu196. In terms of domain architecture, ATP-grasp spans Asp112 to Leu302. Mg(2+)-binding residues include Glu261 and Glu273. N(1)-(5-phospho-beta-D-ribosyl)glycinamide-binding positions include Asp280, Lys350, and Arg357–Arg358.

The protein belongs to the PurK/PurT family. As to quaternary structure, homodimer.

It catalyses the reaction N(1)-(5-phospho-beta-D-ribosyl)glycinamide + formate + ATP = N(2)-formyl-N(1)-(5-phospho-beta-D-ribosyl)glycinamide + ADP + phosphate + H(+). Its pathway is purine metabolism; IMP biosynthesis via de novo pathway; N(2)-formyl-N(1)-(5-phospho-D-ribosyl)glycinamide from N(1)-(5-phospho-D-ribosyl)glycinamide (formate route): step 1/1. In terms of biological role, involved in the de novo purine biosynthesis. Catalyzes the transfer of formate to 5-phospho-ribosyl-glycinamide (GAR), producing 5-phospho-ribosyl-N-formylglycinamide (FGAR). Formate is provided by PurU via hydrolysis of 10-formyl-tetrahydrofolate. The sequence is that of Formate-dependent phosphoribosylglycinamide formyltransferase from Parasynechococcus marenigrum (strain WH8102).